We begin with the raw amino-acid sequence, 504 residues long: Histidine ammonia-lyase (504 aa).

Positions Ala-141–Gly-143 form a cross-link, 5-imidazolinone (Ala-Gly). At Ser-142 the chain carries 2,3-didehydroalanine (Ser).

The protein belongs to the PAL/histidase family. Contains an active site 4-methylidene-imidazol-5-one (MIO), which is formed autocatalytically by cyclization and dehydration of residues Ala-Ser-Gly.

The protein resides in the cytoplasm. It carries out the reaction L-histidine = trans-urocanate + NH4(+). The protein operates within amino-acid degradation; L-histidine degradation into L-glutamate; N-formimidoyl-L-glutamate from L-histidine: step 1/3. The chain is Histidine ammonia-lyase from Geobacillus thermodenitrificans (strain NG80-2).